The sequence spans 193 residues: Putative zinc finger protein 726P1 (193 aa).

The C2H2-type 1; degenerate zinc-finger motif lies at 18-40 (YKCKKCGKTFNWSSILTNNKKIH). Residues 46 to 68 (YKCEECGKAFKQHSTLTTHKIIC) form a C2H2-type 2; atypical zinc finger. The segment at 74-96 (YRCEECGKAFCQPSTLTRYKRMH) adopts a C2H2-type 3; degenerate zinc-finger fold. Residues 102–124 (YKCEECGKAFTQFSTLTKHKRIH) form a C2H2-type 4 zinc finger. A C2H2-type 5; degenerate zinc finger spans residues 130–152 (YKCEESGKAFIWSSGLTEHRRVH). The C2H2-type 6 zinc finger occupies 158–180 (YKCEECGKALIQFSTLTRHKRIH).

This Homo sapiens (Human) protein is Putative zinc finger protein 726P1 (ZNF726P1).